Reading from the N-terminus, the 163-residue chain is Auxin-responsive protein IAA5 (163 aa).

The EAR-like (transcriptional repression) signature appears at 15 to 19 (LRLGL). The region spanning 74–160 (SSYVKVSVDG…KRLRIMKRSC (87 aa)) is the PB1 domain.

This sequence belongs to the Aux/IAA family. As to quaternary structure, homodimers and heterodimers. As to expression, highly expressed in stems and flowers.

It is found in the nucleus. In terms of biological role, aux/IAA proteins are short-lived transcriptional factors that function as repressors of early auxin response genes at low auxin concentrations. Repression is thought to result from the interaction with auxin response factors (ARFs), proteins that bind to the auxin-responsive promoter element (AuxRE). Formation of heterodimers with ARF proteins may alter their ability to modulate early auxin response genes expression. The chain is Auxin-responsive protein IAA5 (IAA5) from Arabidopsis thaliana (Mouse-ear cress).